The primary structure comprises 160 residues: Small ribosomal subunit protein bS6 (160 aa).

It belongs to the bacterial ribosomal protein bS6 family.

Functionally, binds together with bS18 to 16S ribosomal RNA. This Ureaplasma parvum serovar 3 (strain ATCC 27815 / 27 / NCTC 11736) protein is Small ribosomal subunit protein bS6.